Reading from the N-terminus, the 486-residue chain is Monocarboxylate transporter 12 (486 aa).

The Cytoplasmic portion of the chain corresponds to 1-9; sequence MTKITRVSL. Helical transmembrane passes span 10–30, 58–78, 86–106, 115–135, 148–168, 177–197, 253–273, 289–309, 320–340, 353–373, 383–403, and 410–430; these read ASPP…LVTI, AWIH…GSVV, AGIM…SFAT, LGVL…AMVG, IAMS…QLLI, LLIL…MRPI, FVVL…LFVY, AFLM…FGWL, YVCY…LPML, FGYF…EIVG, VVYF…GWLV, and TAAF…LGFV. Topologically, residues 431-486 are cytoplasmic; that stretch reads RIVKRMKRTQVPFPVKDSDPKLQLWTNGSVAYSVARELDQKDEEPLPKARSGCNLT.

It belongs to the major facilitator superfamily. Monocarboxylate porter (TC 2.A.1.13) family. Interacts with isoform 2 of BSG; this interaction is required for its localization to the plasma membrane. As to expression, highly expressed in the lung, liver, kidney, and pancreas. Expressed in eye lens.

Its subcellular location is the cell membrane. The protein resides in the basolateral cell membrane. The catalysed reaction is creatine(in) = creatine(out). It catalyses the reaction guanidinoacetate(in) = guanidinoacetate(out). With respect to regulation, creatine uptake is inhibited by carbonyl cyanide 3-chlorophenylhydrazone (CCCP) and by valinomycin. Functions as a transporter for creatine and as well for its precursor guanidinoacetate. Transport of creatine and GAA is independent of resting membrane potential and extracellular Na(+), Cl(-), or pH. Contributes to the process of creatine biosynthesis and distribution. This Mus musculus (Mouse) protein is Monocarboxylate transporter 12.